A 563-amino-acid polypeptide reads, in one-letter code: MDYKNLVAERIKENTELEVDLIEKLIEIPPKKEMGDYAFPCFQLAKTFRKAPNLIAEELKEKINKEGFEKVVTVGPYLNFFVDKTILIKDVLEKVLSEKEKYGSSKVGEGKNVVVEYSSPNIAKPFHIGHLFTTAIGNALYKILSFEGYNCIGINHLGDWGTQFGKLISAYRRWVDEEALEKDAIGELLRIYVKFHEEAEKDPELEKEARLNFKNLEDGSKEETELWNRFKDLSLKEFNKVYDMLGIKFDSLAGESFYSDKMDAVVQEIDDKGLLVDSNGAKVVMLDEYNMPPCMIKKSDGATIYATRDLAAAIYRKKTYDFHKCIYVVGTPQALHFKQVFTTLKLMGHDWADDCKHVGFGLVKLANKKLSTRNGDVVFLEDLLNQSVEETLKIINEKNPNLKNKEDVAKKLGIGAVVFTYLKNNRERDIVFDWKEILSFDGETGPYVEYSYARGKSILRKAGELTGEADYSKLSSKEEFELAKLLGGFNDAIMNAIDKLEPAMVTRYIIEVAKAFNKFYNAHGILNAEDNDVKLARVKLVEATCQVIKNALNLLGIDVVEEM.

A 'HIGH' region motif is present at residues 120 to 130 (PNIAKPFHIGH).

Belongs to the class-I aminoacyl-tRNA synthetase family. Monomer.

The protein localises to the cytoplasm. The catalysed reaction is tRNA(Arg) + L-arginine + ATP = L-arginyl-tRNA(Arg) + AMP + diphosphate. In Clostridium botulinum (strain Langeland / NCTC 10281 / Type F), this protein is Arginine--tRNA ligase.